The following is a 217-amino-acid chain: Adenylate kinase (217 aa).

An ATP-binding site is contributed by 10-15; that stretch reads GAGKGT. The interval 30-59 is NMP; sequence STGDMLRAAVKAGSPLGVKVKDIMASGQLV. AMP is bound by residues Thr31, Arg36, 57 to 59, 85 to 88, and Gln92; these read QLV and GFPR. The segment at 122-159 is LID; that stretch reads GRRVHEASGRIYHVTHNPPKTEGVDDITGEPLVQRDDD. ATP-binding positions include Arg123 and 132-133; that span reads IY. Residues Arg156 and Arg167 each contribute to the AMP site. Gly202 is an ATP binding site.

Belongs to the adenylate kinase family. Monomer.

The protein localises to the cytoplasm. The enzyme catalyses AMP + ATP = 2 ADP. It functions in the pathway purine metabolism; AMP biosynthesis via salvage pathway; AMP from ADP: step 1/1. In terms of biological role, catalyzes the reversible transfer of the terminal phosphate group between ATP and AMP. Plays an important role in cellular energy homeostasis and in adenine nucleotide metabolism. The sequence is that of Adenylate kinase from Teredinibacter turnerae (strain ATCC 39867 / T7901).